A 64-amino-acid polypeptide reads, in one-letter code: Chassatide C7 (64 aa).

The propeptide at 1-35 (VLVASLVMLEAQSSDTIQVPDWGKRLLMNHDSNRV) is removed in mature form. Cystine bridges form between cysteine 39–cysteine 55, cysteine 43–cysteine 57, and cysteine 48–cysteine 62.

As to expression, expressed in fruit, pedicel, root and stem but not in leaf (at protein level).

In terms of biological role, probably participates in a plant defense mechanism. Active against E.coli ATTC25922 but not against S.aureus ATCC 12600 or S.epidermidis ATCC 14990. Has cytotoxic and hemolytic activity. This Chassalia chartacea (Chassalia curviflora) protein is Chassatide C7.